The primary structure comprises 1943 residues: Protocadherin-15 (1943 aa).

An N-terminal signal peptide occupies residues 1–26 (MFLQFAVWKCLPHGILIASLLVVSWG). Over 27–1381 (QYDDDWQYED…GESLGYTEGA (1355 aa)) the chain is Extracellular. Cys-37 and Cys-125 are oxidised to a cystine. Cadherin domains lie at 45-152 (PATI…SPTF), 153-270 (KHES…GPMF), 283-400 (RPLT…SPYF), 401-514 (TMPS…TPTF), 515-621 (PEIS…PPRF), 622-722 (PQLM…APVF), 724-824 (PYLP…SPVF), 825-931 (TNST…PPVF), 932-1040 (SKRI…IPRF), 1042-1149 (QEEY…PPVF), and 1150-1264 (QKKF…PPTL). Residues Asn-57, Asn-102, and Asn-206 are each glycosylated (N-linked (GlcNAc...) asparagine). N-linked (GlcNAc...) asparagine glycans are attached at residues Asn-424, Asn-564, Asn-667, Asn-729, Asn-773, Asn-826, and Asn-856. N-linked (GlcNAc...) asparagine glycans are attached at residues Asn-1069, Asn-1089, and Asn-1180. A helical transmembrane segment spans residues 1382–1402 (LLALAFIIILCCIPAILVVLV). Over 1403 to 1943 (SYRQFKVRQA…VQPHSQSTSL (541 aa)) the chain is Cytoplasmic. 3 disordered regions span residues 1425-1453 (PAAK…AHLY), 1475-1533 (GNNS…STHN), and 1714-1865 (ILNS…EPHR). Positions 1431-1449 (APVPAAPAPPPPPPPPPPG) are enriched in pro residues. Basic and acidic residues-rich tracts occupy residues 1480–1489 (PEDRSSHRDG) and 1498–1509 (ESHEPAHVEGPL). Composition is skewed to pro residues over residues 1742–1760 (PHPP…PRPP) and 1769–1779 (PLSPPNPPPPQ). Positions 1784–1795 (SLPISTPPTSSL) are enriched in low complexity. Pro residues predominate over residues 1796-1821 (PLPPPLSLPPPPRPPAPRLFPQPPST). Residues 1822–1834 (SIPSTDSISAPAA) show a composition bias toward low complexity. Positions 1846–1858 (TTSTTQPPASNPQ) are enriched in polar residues.

Antiparallel heterodimer with CDH23. Found in a complex with TMIE and LHFPL5. Interacts with LHFPL5/TMHS; this interaction is required for efficient localization to hair bundles. Interacts with MYO7A. Interacts with USH1G; this interaction may recruit USH1G to the plasma membrane. Interacts with TOMT. Isoforms CD1 and CD3 interact with TMC1 (via N-terminus) and TMC2 (via N-terminus). Interacts with PIEZO1. As to expression, expressed in brain and sensory epithelium of the developing inner ear. Expressed in the retina, in the photoreceptor inner segments, the outer plexiform layer, the inner nuclei layer and the ganglion cell layer and, more diffusely in the inner plexiform layer (at protein level). Not detected in the retinal pigment epithelium (at protein level). Expressed in the spleen, dorsal root ganglion, dorsal aspect of neural tube, floor plate and ependymal cells adjacent to the neural canal.

The protein resides in the cell membrane. The protein localises to the secreted. In terms of biological role, calcium-dependent cell-adhesion protein. Required for inner ear neuroepithelial cell elaboration and cochlear function. Probably involved in the maintenance of normal retinal function. This Mus musculus (Mouse) protein is Protocadherin-15 (Pcdh15).